We begin with the raw amino-acid sequence, 249 residues long: DNA repair protein RecO (249 aa).

The protein belongs to the RecO family.

Functionally, involved in DNA repair and RecF pathway recombination. The chain is DNA repair protein RecO from Rhodopseudomonas palustris (strain HaA2).